Consider the following 116-residue polypeptide: Iron-sulfur cluster insertion protein ErpA (116 aa).

Residues cysteine 44, cysteine 108, and cysteine 110 each coordinate iron-sulfur cluster.

It belongs to the HesB/IscA family. In terms of assembly, homodimer. It depends on iron-sulfur cluster as a cofactor.

Functionally, required for insertion of 4Fe-4S clusters for at least IspG. This Shewanella halifaxensis (strain HAW-EB4) protein is Iron-sulfur cluster insertion protein ErpA.